Here is a 202-residue protein sequence, read N- to C-terminus: Nuclear transcription factor Y subunit C-6 (202 aa).

The span at 1 to 16 shows a compositional bias: low complexity; that stretch reads MAENNNNNGDNMNNDN. Disordered stretches follow at residues 1-29 and 180-202; these read MAEN…LPPM and AWPA…GGGN. The segment covering 17–29 has biased composition (polar residues); sequence HQQPPSYSQLPPM.

This sequence belongs to the NFYC/HAP5 subunit family. As to quaternary structure, heterotrimeric transcription factor composed of three components, NF-YA, NF-YB and NF-YC. NF-YB and NF-YC must interact and dimerize for NF-YA association and DNA binding. As to expression, expressed in flowers and siliques.

It is found in the nucleus. Functionally, stimulates the transcription of various genes by recognizing and binding to a CCAAT motif in promoters. This is Nuclear transcription factor Y subunit C-6 (NFYC6) from Arabidopsis thaliana (Mouse-ear cress).